The sequence spans 370 residues: tRNA-specific 2-thiouridylase MnmA (370 aa).

ATP is bound by residues 24-31 (AMSGGVDS) and L50. C119 functions as the Nucleophile in the catalytic mechanism. C119 and C215 are joined by a disulfide. G143 provides a ligand contact to ATP. The interval 165–167 (KDQ) is interaction with tRNA. C215 serves as the catalytic Cysteine persulfide intermediate.

Belongs to the MnmA/TRMU family.

Its subcellular location is the cytoplasm. It carries out the reaction S-sulfanyl-L-cysteinyl-[protein] + uridine(34) in tRNA + AH2 + ATP = 2-thiouridine(34) in tRNA + L-cysteinyl-[protein] + A + AMP + diphosphate + H(+). In terms of biological role, catalyzes the 2-thiolation of uridine at the wobble position (U34) of tRNA, leading to the formation of s(2)U34. The protein is tRNA-specific 2-thiouridylase MnmA of Wolbachia sp. subsp. Drosophila simulans (strain wRi).